Consider the following 217-residue polypeptide: Protein-L-isoaspartate O-methyltransferase 2 (217 aa).

Residue S64 is part of the active site.

This sequence belongs to the methyltransferase superfamily. L-isoaspartyl/D-aspartyl protein methyltransferase family.

Its subcellular location is the cytoplasm. It catalyses the reaction [protein]-L-isoaspartate + S-adenosyl-L-methionine = [protein]-L-isoaspartate alpha-methyl ester + S-adenosyl-L-homocysteine. Functionally, catalyzes the methyl esterification of L-isoaspartyl residues in peptides and proteins that result from spontaneous decomposition of normal L-aspartyl and L-asparaginyl residues. It plays a role in the repair and/or degradation of damaged proteins. The sequence is that of Protein-L-isoaspartate O-methyltransferase 2 from Rhodopseudomonas palustris (strain HaA2).